Reading from the N-terminus, the 1128-residue chain is Zinc finger protein 654 (1128 aa).

Residues 498 to 523 (GFDSLTDQSTGETDPDDVSGVQPKGH) form a disordered region. 5 consecutive C2H2-type zinc fingers follow at residues 572-594 (FACV…LKNH), 746-771 (FKCP…MTVH), 787-809 (GKCK…LNRH), 815-839 (YFCL…TKSH), and 844-868 (AQCS…EAQH). The segment at 891-951 (DSNPNQEKDS…GNERSDDTVS (61 aa)) is disordered. Composition is skewed to polar residues over residues 903–915 (NEKQ…VSTS) and 937–951 (SLVQ…DTVS). Residues serine 1123 and serine 1127 each carry the phosphoserine modification.

Belongs to the krueppel C2H2-type zinc-finger protein family.

The protein resides in the nucleus. May be involved in transcriptional regulation. The sequence is that of Zinc finger protein 654 from Homo sapiens (Human).